The sequence spans 344 residues: Ribosomal large subunit pseudouridine synthase D (344 aa).

The tract at residues methionine 1–glutamate 29 is disordered. The 74-residue stretch at leucine 43–aspartate 116 folds into the S4 RNA-binding domain. The active site involves aspartate 164.

This sequence belongs to the pseudouridine synthase RluA family.

It localises to the cytoplasm. It catalyses the reaction uridine(1911/1915/1917) in 23S rRNA = pseudouridine(1911/1915/1917) in 23S rRNA. In terms of biological role, responsible for synthesis of pseudouridine from uracil at positions 1911, 1915 and 1917 in 23S ribosomal RNA. This chain is Ribosomal large subunit pseudouridine synthase D (rluD), found in Nitrosomonas europaea (strain ATCC 19718 / CIP 103999 / KCTC 2705 / NBRC 14298).